Reading from the N-terminus, the 311-residue chain is Bifunctional protein FolD (311 aa).

Position 174 to 176 (174 to 176) interacts with NADP(+); that stretch reads GKG.

This sequence belongs to the tetrahydrofolate dehydrogenase/cyclohydrolase family. In terms of assembly, homodimer.

The catalysed reaction is (6R)-5,10-methylene-5,6,7,8-tetrahydrofolate + NADP(+) = (6R)-5,10-methenyltetrahydrofolate + NADPH. The enzyme catalyses (6R)-5,10-methenyltetrahydrofolate + H2O = (6R)-10-formyltetrahydrofolate + H(+). The protein operates within one-carbon metabolism; tetrahydrofolate interconversion. Its function is as follows. Catalyzes the oxidation of 5,10-methylenetetrahydrofolate to 5,10-methenyltetrahydrofolate and then the hydrolysis of 5,10-methenyltetrahydrofolate to 10-formyltetrahydrofolate. The chain is Bifunctional protein FolD from Pyrobaculum arsenaticum (strain DSM 13514 / JCM 11321 / PZ6).